The following is a 525-amino-acid chain: GMP synthase [glutamine-hydrolyzing] (525 aa).

Residues 9 to 207 enclose the Glutamine amidotransferase type-1 domain; sequence RILILDFGSQ…VLDICQCEKL (199 aa). Cysteine 86 (nucleophile) is an active-site residue. Residues histidine 181 and glutamate 183 contribute to the active site. The region spanning 208–400 is the GMPS ATP-PPase domain; the sequence is WTPDAIIEDA…LGLPYDMLYR (193 aa). An ATP-binding site is contributed by 235-241; that stretch reads SGGVDSS.

Homodimer.

It carries out the reaction XMP + L-glutamine + ATP + H2O = GMP + L-glutamate + AMP + diphosphate + 2 H(+). It functions in the pathway purine metabolism; GMP biosynthesis; GMP from XMP (L-Gln route): step 1/1. Its function is as follows. Catalyzes the synthesis of GMP from XMP. This is GMP synthase [glutamine-hydrolyzing] from Pseudoalteromonas atlantica (strain T6c / ATCC BAA-1087).